A 215-amino-acid polypeptide reads, in one-letter code: Imidazole glycerol phosphate synthase subunit HisH (215 aa).

Positions 8–215 (KVVVFDYGFG…QLLNNWIGTL (208 aa)) constitute a Glutamine amidotransferase type-1 domain. Cys-86 serves as the catalytic Nucleophile. Active-site residues include His-196 and Glu-198.

As to quaternary structure, heterodimer of HisH and HisF.

It localises to the cytoplasm. It carries out the reaction 5-[(5-phospho-1-deoxy-D-ribulos-1-ylimino)methylamino]-1-(5-phospho-beta-D-ribosyl)imidazole-4-carboxamide + L-glutamine = D-erythro-1-(imidazol-4-yl)glycerol 3-phosphate + 5-amino-1-(5-phospho-beta-D-ribosyl)imidazole-4-carboxamide + L-glutamate + H(+). It catalyses the reaction L-glutamine + H2O = L-glutamate + NH4(+). It participates in amino-acid biosynthesis; L-histidine biosynthesis; L-histidine from 5-phospho-alpha-D-ribose 1-diphosphate: step 5/9. Functionally, IGPS catalyzes the conversion of PRFAR and glutamine to IGP, AICAR and glutamate. The HisH subunit catalyzes the hydrolysis of glutamine to glutamate and ammonia as part of the synthesis of IGP and AICAR. The resulting ammonia molecule is channeled to the active site of HisF. The chain is Imidazole glycerol phosphate synthase subunit HisH from Streptomyces avermitilis (strain ATCC 31267 / DSM 46492 / JCM 5070 / NBRC 14893 / NCIMB 12804 / NRRL 8165 / MA-4680).